The chain runs to 377 residues: Cilia- and flagella-associated protein 263 (377 aa).

Coiled coils occupy residues 95–243 and 280–354; these read LTAD…NQEL and LRKE…SLKG.

It belongs to the CFAP263 family. Forms a complex with CFAP184; the interaction is required for functional activity in cilia. Interacts with HAP1 and PCM1.

It is found in the cytoplasm. The protein localises to the cytoskeleton. The protein resides in the microtubule organizing center. It localises to the centrosome. Its subcellular location is the centriolar satellite. It is found in the cell projection. The protein localises to the cilium. Component of centriolar satellites contributing to primary cilium formation. In complex with CFAP263, acts as a regulator of ciliary beating that connects radial spoke 3 (RS3) to the inner dynein arm (IDA) and the nexin-dynein regulatory complex (N-DRC). The complex is positioned parallel to N-DRC and forms a connection between the arch at the base of RS3, the IDA tail and N-DRC. The protein is Cilia- and flagella-associated protein 263 of Homo sapiens (Human).